Here is a 138-residue protein sequence, read N- to C-terminus: Large ribosomal subunit protein uL16 (138 aa).

A compositionally biased stretch (basic residues) spans M1–G16. A disordered region spans residues M1–T25.

Belongs to the universal ribosomal protein uL16 family. Part of the 50S ribosomal subunit.

Its function is as follows. Binds 23S rRNA and is also seen to make contacts with the A and possibly P site tRNAs. The sequence is that of Large ribosomal subunit protein uL16 from Renibacterium salmoninarum (strain ATCC 33209 / DSM 20767 / JCM 11484 / NBRC 15589 / NCIMB 2235).